Reading from the N-terminus, the 352-residue chain is Light dependent period A (352 aa).

4Fe-4S ferredoxin-type domains follow at residues 88–119 (RRAWFDPDRCPTDCPRPCERVCPTDAITSTGV) and 121–144 (RDRCYGCGRCLPICPLGLIEAQAW). The [4Fe-4S] cluster site is built by Cys97, Cys101, Cys105, Cys109, Cys124, Cys127, Cys130, and Cys134.

Interacts with KaiA, CikA and SasA; the complexes do not follow circadian rhythms. The cofactor is [4Fe-4S] cluster.

Functionally, functions in an input pathway to the Kai circadian clock. Probably senses the metabolic state of the cell via plastoquinone levels and informs the clock to modulate the photoperiod length. Deletion decreases the ability of the bacteria to modulate the circadian period in response to altered light regimes. Mild overexpression increases the photoperiod. Rapidly degraded in the presence of the quinone analog DBMIB (2,5-dibromo-3-methyl-6-isopropyl-p-benzoquinone), an artifical electron acceptor for photosystem II that reduces the plastoquinone pool. Partially resonsible for sensitivity of CikA to DBMIB, influences the levels of KaiA. The protein is Light dependent period A of Synechococcus elongatus (strain ATCC 33912 / PCC 7942 / FACHB-805) (Anacystis nidulans R2).